A 715-amino-acid polypeptide reads, in one-letter code: Fatty acid oxidation complex subunit alpha (715 aa).

The tract at residues 1–190 (MTTTSAFMLN…KAGLVDDVVP (190 aa)) is enoyl-CoA hydratase. A 3-hydroxyacyl-CoA dehydrogenase region spans residues 306–715 (GPLNSVGILG…WTNGETDQGN (410 aa)).

This sequence in the N-terminal section; belongs to the enoyl-CoA hydratase/isomerase family. In the central section; belongs to the 3-hydroxyacyl-CoA dehydrogenase family. In terms of assembly, heterotetramer of two alpha chains (FadJ) and two beta chains (FadI).

The protein resides in the cytoplasm. It carries out the reaction a (3S)-3-hydroxyacyl-CoA = a (2E)-enoyl-CoA + H2O. It catalyses the reaction a 4-saturated-(3S)-3-hydroxyacyl-CoA = a (3E)-enoyl-CoA + H2O. The enzyme catalyses a (3S)-3-hydroxyacyl-CoA + NAD(+) = a 3-oxoacyl-CoA + NADH + H(+). The catalysed reaction is (3S)-3-hydroxybutanoyl-CoA = (3R)-3-hydroxybutanoyl-CoA. It participates in lipid metabolism; fatty acid beta-oxidation. Functionally, catalyzes the formation of a hydroxyacyl-CoA by addition of water on enoyl-CoA. Also exhibits 3-hydroxyacyl-CoA epimerase and 3-hydroxyacyl-CoA dehydrogenase activities. The chain is Fatty acid oxidation complex subunit alpha from Salmonella paratyphi B (strain ATCC BAA-1250 / SPB7).